A 144-amino-acid polypeptide reads, in one-letter code: Prefoldin subunit alpha (144 aa).

It belongs to the prefoldin alpha subunit family. In terms of assembly, heterohexamer of two alpha and four beta subunits.

It localises to the cytoplasm. In terms of biological role, molecular chaperone capable of stabilizing a range of proteins. Seems to fulfill an ATP-independent, HSP70-like function in archaeal de novo protein folding. The polypeptide is Prefoldin subunit alpha (Metallosphaera sedula (strain ATCC 51363 / DSM 5348 / JCM 9185 / NBRC 15509 / TH2)).